A 420-amino-acid polypeptide reads, in one-letter code: COP9 signalosome complex subunit 11 (420 aa).

A PCI domain is found at 177-346 (SIHEHPSLVD…VYYKEDLPVG (170 aa)). The tract at residues 386–420 (VEPLNRSQDMDAFELHEQSEDEEYEEEHLEEGENV) is disordered. Residues 404-420 (SEDEEYEEEHLEEGENV) show a composition bias toward acidic residues.

In terms of assembly, component of a COP9 signalosome-like (CSN) complex.

The protein localises to the cytoplasm. It localises to the nucleus. Functionally, component of the COP9 signalosome (CSN) complex that acts as an regulator of the ubiquitin (Ubl) conjugation pathway by mediating the deneddylation of the cullin subunit of SCF-type E3 ubiquitin-protein ligase complexes The CSN complex is involved in the regulation of the mating pheromone response. PCI8 may also be involved in transcriptional and translational control. The polypeptide is COP9 signalosome complex subunit 11 (PCI8) (Eremothecium gossypii (strain ATCC 10895 / CBS 109.51 / FGSC 9923 / NRRL Y-1056) (Yeast)).